A 333-amino-acid chain; its full sequence is Anthranilate phosphoribosyltransferase (333 aa).

Residues G78, G81 to D82, T86, N88 to T91, K106 to S114, and S118 contribute to the 5-phospho-alpha-D-ribose 1-diphosphate site. Residue G78 coordinates anthranilate. Mg(2+) is bound at residue S90. An anthranilate-binding site is contributed by N109. An anthranilate-binding site is contributed by R164. D222 and E223 together coordinate Mg(2+).

Belongs to the anthranilate phosphoribosyltransferase family. In terms of assembly, homodimer. Requires Mg(2+) as cofactor.

It carries out the reaction N-(5-phospho-beta-D-ribosyl)anthranilate + diphosphate = 5-phospho-alpha-D-ribose 1-diphosphate + anthranilate. Its pathway is amino-acid biosynthesis; L-tryptophan biosynthesis; L-tryptophan from chorismate: step 2/5. Its function is as follows. Catalyzes the transfer of the phosphoribosyl group of 5-phosphorylribose-1-pyrophosphate (PRPP) to anthranilate to yield N-(5'-phosphoribosyl)-anthranilate (PRA). In Natronomonas pharaonis (strain ATCC 35678 / DSM 2160 / CIP 103997 / JCM 8858 / NBRC 14720 / NCIMB 2260 / Gabara) (Halobacterium pharaonis), this protein is Anthranilate phosphoribosyltransferase.